The chain runs to 169 residues: MRKLKYHEKKLLTKHDFLNYKKDDNNHRDVNVIRRYHIPQREDYFKYNQLVGLLLGIANKLSLLEPTDSFGNLHKKMLLGKLFDMALLTSTPKLSDVENKLTVSAFCRRRLPVVMCRLKMCETVSTSVKYVEHGHVRVGPEVITDPAFFVTRNMEDFVTWVDSSKIRRN.

The region spanning 109–166 (RRLPVVMCRLKMCETVSTSVKYVEHGHVRVGPEVITDPAFFVTRNMEDFVTWVDSSKI) is the S4 RNA-binding domain.

It belongs to the universal ribosomal protein uS4 family. As to quaternary structure, component of a heterotrimeric complex containing imp3, imp4 and mpp10.

It is found in the nucleus. The protein resides in the nucleolus. In terms of biological role, component of the U3 small nucleolar ribonucleoprotein. Required for the early cleavages at sites A0, A1 and A2 during 18S ribosomal pre-RNA processing. This Pneumocystis carinii protein is U3 small nucleolar ribonucleoprotein protein imp3 (RBP).